The primary structure comprises 289 residues: Protease HtpX homolog (289 aa).

2 helical membrane-spanning segments follow: residues 8-28 (LALL…VIGG) and 29-49 (SSGL…SWYQ). Residue histidine 132 participates in Zn(2+) binding. Glutamate 133 is an active-site residue. Residue histidine 136 coordinates Zn(2+). The next 2 helical transmembrane spans lie at 151–171 (VAGA…FGGI) and 183–203 (LGVL…QLAI). Glutamate 208 lines the Zn(2+) pocket.

The protein belongs to the peptidase M48B family. Zn(2+) is required as a cofactor.

It localises to the cell inner membrane. The chain is Protease HtpX homolog from Nostoc sp. (strain PCC 7120 / SAG 25.82 / UTEX 2576).